We begin with the raw amino-acid sequence, 257 residues long: GTP cyclohydrolase FolE2 (257 aa).

It belongs to the GTP cyclohydrolase IV family.

The catalysed reaction is GTP + H2O = 7,8-dihydroneopterin 3'-triphosphate + formate + H(+). It functions in the pathway cofactor biosynthesis; 7,8-dihydroneopterin triphosphate biosynthesis; 7,8-dihydroneopterin triphosphate from GTP: step 1/1. Functionally, converts GTP to 7,8-dihydroneopterin triphosphate. The sequence is that of GTP cyclohydrolase FolE2 from Pelobacter propionicus (strain DSM 2379 / NBRC 103807 / OttBd1).